A 432-amino-acid chain; its full sequence is Alpha-ketoglutarate permease (432 aa).

Residues 1-32 (MAESTVTADSKLTSSDTRRRIWAIVGASSGNL) are Cytoplasmic-facing. Residues 33-53 (VEWFDFYVYSFCSLYFAHIFF) form a helical membrane-spanning segment. Residues 54 to 62 (PSGNTTTQL) are Periplasmic-facing. The chain crosses the membrane as a helical span at residues 63-83 (LQTAGVFAAGFLMRPIGGWLF). Residues 84 to 95 (GRIADKHGRKKS) lie on the Cytoplasmic side of the membrane. A helical transmembrane segment spans residues 96-116 (MLLSVCMMCFGSLVIACLPGY). The Periplasmic portion of the chain corresponds to 117 to 118 (ET). A helical transmembrane segment spans residues 119–139 (IGTWAPALLLLARLFQGLSVG). The Cytoplasmic portion of the chain corresponds to 140-162 (GEYGTSATYMSEVAVEGRKGFYA). The helical transmembrane segment at 163–183 (SFQYVTLIGGQLLALLVVVVL) threads the bilayer. Topologically, residues 184-193 (QHTMEDAALR) are periplasmic. A helical transmembrane segment spans residues 194–214 (EWGWRIPFALGAVLAVVALWL). Topologically, residues 215 to 243 (RRQLDETSQQETRALKEAGSLKGLWRNRR) are cytoplasmic. Residues 244–264 (AFIMVLGFTAAGSLCFYTFTT) form a helical membrane-spanning segment. Over 265–279 (YMQKYLVNTAGMHAN) the chain is Periplasmic. The chain crosses the membrane as a helical span at residues 280–300 (VASGIMTAALFVFMLIQPLIG). The Cytoplasmic portion of the chain corresponds to 301–309 (ALSDKIGRR). A helical transmembrane segment spans residues 310–330 (TSMLCFGSLAAIFTVPILSAL). At 331 to 339 (QNVSSPYAA) the chain is on the periplasmic side. A helical transmembrane segment spans residues 340–360 (FGLVMCALLIVSFYTSISGIL). Residues 361-373 (KAEMFPAQVRALG) are Cytoplasmic-facing. Residues 374-394 (VGLSYAVANAIFGGSAEYVAL) traverse the membrane as a helical segment. Residues 395–402 (SLKSIGME) are Periplasmic-facing. Residues 403–423 (TAFFWYVTLMAVVAFLVSLML) traverse the membrane as a helical segment. Residues 424–432 (HRKGKGMRL) are Cytoplasmic-facing.

The protein belongs to the major facilitator superfamily. Metabolite:H+ Symporter (MHS) family (TC 2.A.1.6) family.

It localises to the cell inner membrane. Functionally, uptake of alpha-ketoglutarate across the boundary membrane with the concomitant import of a cation (symport system). This Escherichia coli (strain K12) protein is Alpha-ketoglutarate permease (kgtP).